The chain runs to 218 residues: Riboflavin kinase (218 aa).

Positions 1 to 27 (MRPDGPRDPVAGPDSGPEPPYPVRLSG) are disordered. Mg(2+)-binding residues include threonine 44 and asparagine 46. Glutamate 120 serves as the catalytic Nucleophile.

Belongs to the flavokinase family. Requires Zn(2+) as cofactor. It depends on Mg(2+) as a cofactor.

It catalyses the reaction riboflavin + ATP = FMN + ADP + H(+). It participates in cofactor biosynthesis; FMN biosynthesis; FMN from riboflavin (ATP route): step 1/1. Catalyzes the phosphorylation of riboflavin (vitamin B2) to form flavin mononucleotide (FMN) coenzyme. The sequence is that of Riboflavin kinase (fmn1) from Neosartorya fischeri (strain ATCC 1020 / DSM 3700 / CBS 544.65 / FGSC A1164 / JCM 1740 / NRRL 181 / WB 181) (Aspergillus fischerianus).